The primary structure comprises 417 residues: Ribonucleoside-diphosphate reductase small chain (417 aa).

Residues Asp168, Glu199, and His202 each coordinate Fe cation. Tyr206 is an active-site residue. The Fe cation site is built by Glu261, Glu297, and His300.

It belongs to the ribonucleoside diphosphate reductase small chain family. Heterotetramer composed of a homodimer of the large subunit (R1) and a homodimer of the small subunit (R2). Larger multisubunit protein complex are also active, composed of (R1)n(R2)n. Requires Fe cation as cofactor.

It catalyses the reaction a 2'-deoxyribonucleoside 5'-diphosphate + [thioredoxin]-disulfide + H2O = a ribonucleoside 5'-diphosphate + [thioredoxin]-dithiol. Its function is as follows. Ribonucleoside-diphosphate reductase holoenzyme provides the precursors necessary for viral DNA synthesis. Allows virus growth in non-dividing cells. Catalyzes the biosynthesis of deoxyribonucleotides from the corresponding ribonucleotides. The polypeptide is Ribonucleoside-diphosphate reductase small chain (RNR2) (Acanthamoeba polyphaga mimivirus (APMV)).